A 61-amino-acid chain; its full sequence is Large ribosomal subunit protein uL30 (61 aa).

Belongs to the universal ribosomal protein uL30 family. In terms of assembly, part of the 50S ribosomal subunit.

In Parafrankia sp. (strain EAN1pec), this protein is Large ribosomal subunit protein uL30.